The sequence spans 281 residues: Nuclear receptor-interacting protein 2 (281 aa).

The interval Glu18–Leu85 is disordered. Over residues Thr36–Pro47 the composition is skewed to pro residues. A compositionally biased stretch (basic and acidic residues) spans Gln55–His78. The short motif at Leu244–Leu248 is the LXXLL motif element.

Interacts with NR1F2, RARA and THRB in a ligand-dependent manner.

The protein localises to the nucleus. Down-regulates transcriptional activation by nuclear receptors such as NR1F2. This Homo sapiens (Human) protein is Nuclear receptor-interacting protein 2 (NRIP2).